The following is a 252-amino-acid chain: Neurovirulence factor ICP34.5 (252 aa).

Residues 1 to 15 are compositionally biased toward basic residues; sequence MARRRRRHRGPRRPR. The tract at residues 1–17 is required for nucleolar localization; sequence MARRRRRHRGPRRPRPP. Disordered regions lie at residues 1–129 and 150–179; these read MARR…PFRL and RRAG…PATP. Polar residues predominate over residues 25-36; the sequence is TAQSQVTSTPNS. Residues 46–59 show a composition bias toward pro residues; it reads AAPPPPPAGGPPPS. The span at 74–84 shows a compositional bias: acidic residues; it reads ASDDDDDDDWP. 2 stretches are compositionally biased toward pro residues: residues 85–94 and 120–129; these read DSPPPEPAPE and SHPPSRPFRL. A Nuclear export signal motif is present at residues 129 to 138; it reads LPPRLALRLR. 6 repeat units span residues 162-164, 165-167, 168-170, 171-173, 174-176, and 177-179. The tract at residues 162 to 179 is 6 X 3 AA tandem repeats of A-T-P; it reads ATPATPATPATPATPATP. Residues 165–179 are compositionally biased toward low complexity; the sequence is ATPATPATPATPATP. Residues 179-192 are binding to PP1CA; that stretch reads PARVRFSPHVRVRH. The interval 179 to 192 is interaction with host PPP1CA; it reads PARVRFSPHVRVRH. Residues 194 to 252 form an important for interferon resistance region; it reads VVWASAARLARRGSWARERADRARFRRRVAEAEAVIGPCLGPKARARALARGAGPANSV. Positions 204-222 match the Bipartite nuclear localization signal motif; it reads RRGSWARERADRARFRRRV. The interval 222-237 is interaction with host EIF2S1/EIF-2ALPHA; the sequence is VAEAEAVIGPCLGPKA.

Belongs to the PPP1R15 family. Interacts with host PPP1CA to form a high-molecular-weight complex that dephosphorylates EIF2S1/eIF-2alpha. Interacts with host EIF2S1/eIF-2alpha; this interaction is crucial for the specific dephosphorylation of EIF2S1/eIF-2alpha by PPP1CA. Binds to proliferating cell nuclear antigen (PCNA), which may release host cells from growth arrest and facilitate viral replication. Interacts (via N-terminus) with host C1QBP and PRKCA. Interacts with protein UL31. Interacts with host TBK1. Interacts with host STING/TMEM173; this interaction inhibits the intracellular DNA sensing pathway. Interacts with host BECN1; this interaction modulates host autophagy.

Its subcellular location is the host cytoplasm. It is found in the host nucleus. The protein localises to the host nucleolus. It localises to the virion. In terms of biological role, inhibits the establishment of the immune response and of the integrated stress response (ISR) in the infected cell. Plays essential roles in viral nuclear egress to mediate capsid transit across the nuclear membrane. Facilitates nuclear egress cooperatively with host C1QBP and protein kinase C/PKC to induce lamin A/C phosphorylation and subsequent reorganization. In turn, lamina disassembles and nuclear egress occurs. Recruits the serine/threonine protein phosphatase PPP1CA/PP1-alpha to dephosphorylate the translation initiation factor EIF2S1/eIF-2alpha, thereby couteracting the host shutoff of protein synthesis involving double-stranded RNA-dependent protein kinase EIF2AK2/PKR. In turn, controls host IRF3 activation and subsequently inhibits host interferon response. Controls the DNA sensing pathway by interacting with and inhibiting host STING/TMEM173. Also down-modulates the host MHC class II proteins cell surface expression. Acts as a neurovirulence factor that has a profound effect on the growth of the virus in central nervous system tissue, by interacting with host BECN1 and thereby antagonizing the host autophagy response. The sequence is that of Neurovirulence factor ICP34.5 (RL1) from Human herpesvirus 1 (strain CVG-2) (HHV-1).